Here is a 266-residue protein sequence, read N- to C-terminus: Diphthine synthase (266 aa).

S-adenosyl-L-methionine is bound by residues L9, D85, I88, 113-114 (TA), L168, A210, and H235.

It belongs to the diphthine synthase family. As to quaternary structure, homodimer.

It carries out the reaction 2-[(3S)-amino-3-carboxypropyl]-L-histidyl-[translation elongation factor 2] + 3 S-adenosyl-L-methionine = diphthine-[translation elongation factor 2] + 3 S-adenosyl-L-homocysteine + 3 H(+). It functions in the pathway protein modification; peptidyl-diphthamide biosynthesis. Functionally, S-adenosyl-L-methionine-dependent methyltransferase that catalyzes the trimethylation of the amino group of the modified target histidine residue in translation elongation factor 2 (EF-2), to form an intermediate called diphthine. The three successive methylation reactions represent the second step of diphthamide biosynthesis. The chain is Diphthine synthase from Natronomonas pharaonis (strain ATCC 35678 / DSM 2160 / CIP 103997 / JCM 8858 / NBRC 14720 / NCIMB 2260 / Gabara) (Halobacterium pharaonis).